The chain runs to 1403 residues: Eukaryotic translation initiation factor 4 gamma (1403 aa).

Composition is skewed to polar residues over residues 1–11, 19–39, and 50–60; these read MSSKPPSNTPK, ASSQSNKSNSTKASENNTATA, and EPTNTSRANAQ. Disordered regions lie at residues 1–381, 439–464, 488–774, and 861–1003; these read MSSK…GSTP, SRSGSQVSDQVVESPNSSTLSPRNGF, VVVP…KRDL, and AFSD…EALL. Serine 83 is modified (phosphoserine). The segment covering 109–137 has biased composition (polar residues); sequence DNTSKPSANSSAERTSSQHQKPETSSQIG. Composition is skewed to low complexity over residues 190–208 and 231–248; these read SGVSSYSSKSQSVNSSVTS and PRPTTSASNTNTSPANGA. Residues 249–269 show a composition bias toward polar residues; sequence PTNKPSTDINTTDPATQTTQV. Positions 270-291 are enriched in low complexity; sequence SASNSPALSGSSTPSNTSSRSN. Residues 298–308 are compositionally biased toward basic and acidic residues; it reads FSEKRHYDRYG. The span at 325–334 shows a compositional bias: low complexity; sequence NYNNSGNNRN. Composition is skewed to polar residues over residues 346–381, 439–460, and 493–508; these read RNYNNQGAYPTYMSNGRSANQSPRNNPQNVNNGSTP, SRSGSQVSDQVVESPNSSTLSP, and KNASSPNPSETNSRAE. A phosphoserine mark is found at serine 452, serine 455, serine 456, and serine 459. Basic and acidic residues predominate over residues 537–714; it reads IQEKAEAEAK…GKREADKNPE (178 aa). A compositionally biased stretch (polar residues) spans 720-737; that stretch reads PLASSEANVDTSKQTNAT. Basic and acidic residues predominate over residues 741-754; it reads VVDKTKVEKLKASE. The segment covering 757-768 has biased composition (low complexity); that stretch reads STSSLSSPSHST. Phosphoserine is present on residues serine 866 and serine 882. Positions 868–886 are enriched in low complexity; the sequence is RGMYSSSRQSSRSGSNTHS. Threonine 884 is modified (phosphothreonine). Phosphoserine occurs at positions 886, 911, 919, and 921. The residue at position 923 (tyrosine 923) is a Phosphotyrosine. The span at 986-995 shows a compositional bias: basic and acidic residues; sequence KLTEKPAETK. The 237-residue stretch at 1009 to 1245 folds into the MIF4G domain; sequence QRKVKGSLNK…MDVMDSRKNG (237 aa). The interval 1266 to 1403 is disordered; it reads AERKKALAES…QKDSNSKTSS (138 aa). A compositionally biased stretch (basic and acidic residues) spans 1284–1295; it reads HGRDMNRGDSRM. Composition is skewed to polar residues over residues 1302–1313, 1328–1341, and 1348–1358; these read PPFSSSDWSNNK, SGTQGSHGPTSLSS, and VSRTPSRQNSA. Position 1333 is a phosphoserine (serine 1333). Basic and acidic residues predominate over residues 1383–1403; sequence LEEHDHDNDGGQKDSNSKTSS.

It belongs to the eukaryotic initiation factor 4G family.

It localises to the cytoplasm. It is found in the perinuclear region. In terms of biological role, component of the protein complex eIF4F, which is involved in the recognition of the mRNA cap, ATP-dependent unwinding of 5'-terminal secondary structure and recruitment of mRNA to the ribosome. This is Eukaryotic translation initiation factor 4 gamma (tif471) from Schizosaccharomyces pombe (strain 972 / ATCC 24843) (Fission yeast).